Reading from the N-terminus, the 579-residue chain is MKDTIRQLIQQALTRLVTEGVLPEGLTPAIQVENARDKTHGDFASNIAMMLAKPAGMKPRDLAEKLIAALPADQQISKVEIAGPGFLNFFQNTAALAARLDAALADPEKLSVRKAGAAQRVVVDLSAPNLAKEMHVGHLRSTIIGDGVANVLEFLGDTVIRQNHVGDWGTQFGMLLAYLQEKPATSDELSDLENFYRAAKQRFDESEEFAERARGLVVKLQAGDAECLALWTRFKDISLSHCQETYERLNVKLTPADVMGESAYNDDLANVVNDLKATGLLVESNGAQCVFLEEFRTADDTPLPVIVQKAGGGYLYATTDLAAIRYRSKVLKADRVLYFVDQRQALHFQQVFEVARRAGFVHDGMQLEHMGFGTMNGADGRPFKTRDGGTVKLIDLLDEAEERAYTLVREKNPEVAEAELRSIAKAVGISAVKYADLSKHRASDYSFNFDQMLSFEGNTAPYLLYAYTRVAGVFRKLGSAFDASKGQIVLAAPQEQELAARLAQFTETLNNVAEKGTPHVLCAYLYDLAGLFSSFYENCPILGAENPDQQQSRLRLAALTGRTLKQGLDLLGLETLERM.

A 'HIGH' region motif is present at residues 128–138; it reads PNLAKEMHVGH.

This sequence belongs to the class-I aminoacyl-tRNA synthetase family. In terms of assembly, monomer.

Its subcellular location is the cytoplasm. It carries out the reaction tRNA(Arg) + L-arginine + ATP = L-arginyl-tRNA(Arg) + AMP + diphosphate. In Pseudomonas syringae pv. syringae (strain B728a), this protein is Arginine--tRNA ligase.